Consider the following 129-residue polypeptide: ATP synthase epsilon chain (129 aa).

The protein belongs to the ATPase epsilon chain family. As to quaternary structure, F-type ATPases have 2 components, CF(1) - the catalytic core - and CF(0) - the membrane proton channel. CF(1) has five subunits: alpha(3), beta(3), gamma(1), delta(1), epsilon(1). CF(0) has three main subunits: a, b and c.

It localises to the cell inner membrane. Its function is as follows. Produces ATP from ADP in the presence of a proton gradient across the membrane. This Campylobacter jejuni subsp. jejuni serotype O:6 (strain 81116 / NCTC 11828) protein is ATP synthase epsilon chain.